A 373-amino-acid chain; its full sequence is Glutamine synthetase (373 aa).

The GS beta-grasp domain occupies 24–106 (EKVQAMYIWI…VLCEVFKYNR (83 aa)). Positions 113-373 (LRHTCRRIMD…TGDEPFEYKN (261 aa)) constitute a GS catalytic domain. Residue Glu-134 participates in ATP binding. Mn(2+)-binding residues include Glu-134, Glu-136, Glu-196, and Glu-203. 203–208 (EFQVGP) is an ATP binding site. 246–247 (NW) serves as a coordination point for L-glutamate. His-253 serves as a coordination point for Mn(2+). ATP-binding positions include 255-257 (NFS), Arg-319, and Arg-324. Residue Arg-319 participates in L-glutamate binding. 336–338 (YFE) lines the ADP pocket. Position 338 (Glu-338) interacts with Mn(2+). Arg-340 is an L-glutamate binding site.

The protein belongs to the glutamine synthetase family. As to quaternary structure, homooctamer and homotetramer. It depends on biotin as a cofactor. Mg(2+) serves as cofactor. The cofactor is Mn(2+). As to expression, expressed in retina, brain and liver. Little or no detectable expression in breast muscle, pancreas and spleen.

It localises to the cytoplasm. It is found in the mitochondrion. It catalyses the reaction L-glutamate + NH4(+) + ATP = L-glutamine + ADP + phosphate + H(+). The enzyme catalyses L-glutamate + H(+) = 4-aminobutanoate + CO2. With respect to regulation, glutamate to glutamine ratio influences catalytic activity. At glutamate to glutamine ratios greater than 4, decarboxylase activity ceases. In the presence of manganese, synthetase activity is limited to concentrations between 10 mM and 20 mM, whereas decarboxylase activity is not affected. Both catalytic activities are inhibited by avidin. Its function is as follows. Glutamine synthetase that catalyzes the ATP-dependent conversion of glutamate and ammonia to glutamine. When expressed in liver, it may be involved in detoxifying intramitochondrially generated ammonia. Also acts as glutamate decarboxylase by catalyzing the production of 4-aminobutanoate (gamma-aminobutyric acid, GABA) in a pyridoxal phosphate-independent manner. The protein is Glutamine synthetase of Gallus gallus (Chicken).